A 367-amino-acid chain; its full sequence is MASELCKTISVARLEKHKNLFLNYRNLHHFPLELLKDEGLQYLERLYMKRNSLTSLPENLAQKLPNLVELYLHSNNIVVVPEAIGSLVKLQCLDLSDNALEIVCPEIGRLRALRHLRLANNQLQFLPPEVGDLKELQTLDISTNRLLTLPERLHMCLSLQYLTVDRNRLWYVPRHLCQLPSLNELSMAGNRLAFLPLDLGRSRELQYVYVDNNIHLKGLPSYLYNKVIGCSGCGAPIQVSEVKLLSFSSGQRTVFLPAEVKAIGTEHDHVLPLQELAMRGLYHTYHSLLKDLNFLSPISLPRSLLELLHCPLGHCHRCSEPMFTIVYPKLFPLRETPMAGLHQWKTTVSFVAYCCSTQCLQTFDLLS.

9 LRR repeats span residues 16–36 (KHKN…ELLK), 42–63 (YLER…LAQK), 66–87 (NLVE…IGSL), 89–110 (KLQC…IGRL), 112–133 (ALRH…VGDL), 135–156 (ELQT…LHMC), 158–180 (SLQY…CQLP), 181–202 (SLNE…LGRS), and 204–226 (ELQY…LYNK).

In Homo sapiens (Human), this protein is Leucine-rich repeat-containing protein 28 (LRRC28).